The primary structure comprises 483 residues: Protein adenylyltransferase Fic (483 aa).

Residues 20–42 (AFFFIAGSLATFVFHALTSSSSV) form a helical membrane-spanning segment. 2 TPR repeats span residues 107 to 140 (ALGA…APKH) and 141 to 175 (PEVL…SPSN). The Inhibitory (S/T)XXXE(G/N) motif motif lies at 232–237 (SVGIEG). Residues Glu-236 and 317-320 (VGGH) contribute to the ATP site. A Fido domain is found at 286-421 (ITLKDILELH…IRPFVRFIAD (136 aa)). The active site involves His-364. Residues 368–375 (DGNGRTSR), 400–401 (YY), and Asn-408 each bind ATP. The tract at residues 464–483 (SAPEPYESGSGLDSGVNGMP) is disordered.

Belongs to the fic family. As to quaternary structure, homodimer.

The protein resides in the membrane. The enzyme catalyses L-tyrosyl-[protein] + ATP = O-(5'-adenylyl)-L-tyrosyl-[protein] + diphosphate. It catalyses the reaction L-threonyl-[protein] + ATP = 3-O-(5'-adenylyl)-L-threonyl-[protein] + diphosphate. It carries out the reaction 3-O-(5'-adenylyl)-L-threonyl-[protein] + H2O = L-threonyl-[protein] + AMP + H(+). With respect to regulation, the side chain of Glu-236 determines which of the two opposing activities (AMPylase or de-AMPylase) will take place. In response to endoplasmic reticulum stress, mediates de-AMPylase activity. Adenylyltransferase activity is inhibited by the inhibitory helix present at the N-terminus: Glu-236 binds ATP and competes with ATP-binding at Arg-375, thereby preventing adenylyltransferase activity. In unstressed cells, disengagement of Glu-236 promotes adenylyltransferase activity. Activation dissociates ATP-binding from Glu-236, allowing ordered binding of the entire ATP moiety with the alpha-phosphate in an orientation that is productive for accepting an incoming target hydroxyl side chain. In terms of biological role, protein that can both mediate the addition of adenosine 5'-monophosphate (AMP) to specific residues of target proteins (AMPylation), and the removal of the same modification from target proteins (de-AMPylation), depending on the context. The side chain of Glu-236 determines which of the two opposing activities (AMPylase or de-AMPylase) will take place. Acts as a key regulator of the unfolded protein response (UPR) by mediating AMPylation or de-AMPylation of Hsc70-3/BiP. In unstressed cells, acts as an adenylyltransferase by mediating AMPylation of Hsc70-3/BiP at 'Thr-518', thereby inactivating it. In response to endoplasmic reticulum stress, acts as a phosphodiesterase by mediating removal of ATP (de-AMPylation) from Hsc70-3/BiP at 'Thr-518', leading to restore HSPA5/BiP activity. This Drosophila grimshawi (Hawaiian fruit fly) protein is Protein adenylyltransferase Fic.